The following is a 370-amino-acid chain: 2-Hydroxyacid oxidase 1 (370 aa).

The 365-residue stretch at 1–365 (MLPRLICIND…DKTLVRKNPL (365 aa)) folds into the FMN hydroxy acid dehydrogenase domain. Y26 is a glyoxylate binding site. FMN contacts are provided by residues 79 to 81 (ATA), S108, and Q130. Y132 is a binding site for glyoxylate. An FMN-binding site is contributed by T158. Glyoxylate is bound at residue R167. K184 carries the N6-succinyllysine modification. Residues S194 and S230 each carry the phosphoserine modification. K236 and S258 together coordinate FMN. The glyoxylate site is built by H260 and R263. The Proton acceptor role is filled by H260. Residues 291–295 (DGGVR) and 314–315 (GR) each bind FMN. Positions 368–370 (SKI) match the Microbody targeting signal motif.

It belongs to the FMN-dependent alpha-hydroxy acid dehydrogenase family. Homotetramer. FMN is required as a cofactor. Highly expressed in liver.

Its subcellular location is the peroxisome matrix. The enzyme catalyses a (2S)-2-hydroxycarboxylate + O2 = a 2-oxocarboxylate + H2O2. It catalyses the reaction glycolate + O2 = glyoxylate + H2O2. The catalysed reaction is glyoxylate + O2 + H2O = oxalate + H2O2 + H(+). It carries out the reaction 2-hydroxyhexadecanoate + O2 = 2-oxohexadecanoate + H2O2. The enzyme catalyses 2-hydroxyoctanoate + O2 = 2-oxooctanoate + H2O2. Its pathway is amino-acid biosynthesis; glycine biosynthesis. Inhibited by its product oxalate. Inhibited by high concentrations of dichlorophenolindophenol (DCIP) in vitro. Broad substrate specificity (S)-2-hydroxy-acid oxidase that preferentially oxidizes glycolate. The glyoxylate produced by the oxidation of glycolate can then be utilized by alanine-glyoxylate aminotransferase for the peroxisomal synthesis of glycine; this pathway appears to be an important step for the detoxification of glyoxylate which, if allowed to accumulate, may be metabolized to oxalate with formation of kidney stones. Can also catalyze the oxidation of glyoxylate, and long chain hydroxyacids such as 2-hydroxyhexadecanoate and 2-hydroxyoctanoate, albeit with much lower catalytic efficiency. Active in vitro with the artificial electron acceptor 2,6-dichlorophenolindophenol (DCIP), but O2 is believed to be the physiological electron acceptor, leading to the production of H2O2. Is not active on L-lactate and 2-hydroxybutanoate. The polypeptide is 2-Hydroxyacid oxidase 1 (Homo sapiens (Human)).